Consider the following 245-residue polypeptide: Syntaxin-61 (245 aa).

Over M1 to Q224 the chain is Cytoplasmic. In terms of domain architecture, t-SNARE coiled-coil homology spans M153 to V215. The chain crosses the membrane as a helical; Anchor for type IV membrane protein span at residues M225–T245.

Belongs to the syntaxin family. In terms of assembly, interacts with VTI12 and either SYP41, SYP42 or SYP51 in the trans-Golgi network or with VTI11 and SYP51 in the prevacuolar compartment to form t-SNARE complexes. Core constituent of the SNARE complex required for membrane fusion at the trans-Golgi network. Also observed in the SYP121-complex and cellulose synthases. Colocalizes with PIP2-7 and SYP121 in trafficking vesicles and at the plasma membrane. Interacts with SYP121 and PIP2-7. In terms of tissue distribution, expressed in root, leaf, stem, flower and silique, but not in hypocotyl or young leaf. Strong expression in the vasculature and in guard cells of the leaf epidermis.

The protein resides in the golgi apparatus. The protein localises to the trans-Golgi network membrane. It localises to the prevacuolar compartment membrane. Vesicle trafficking protein that functions in the secretory pathway; the fusion of phospholipid vesicles containing SYP61 and VTI12 is triggered by YKT61 and YKT62. Together with VTI12, required for membrane fusion. Involved in osmotic stress tolerance and in abscisic acid (ABA) regulation of stomatal responses. Plays a role in the exocytic trafficking of cellulose synthases (CESAs) and the transport of cell wall components to the plasma membrane. Together with SYP121, regulates the post-Golgi trafficking of the aquaporin PIP2-7 to the plasma membrane, thus modulating cell membrane water permeability. The protein is Syntaxin-61 of Arabidopsis thaliana (Mouse-ear cress).